The chain runs to 325 residues: MAQFAPGVFRTLHGLFAVYKPPGVHWKSVRDTVETNLLKELNALKQRPPRQQIRFLPAGTEGSNGLEVTRVPSAVPVLADHVLVKGPAFTHIRVGTGHRLDIQSSGVFVLGIGHGNKLLKDMYNSHFTRDYTVRGMLGKATEDFTELGKTIEKTTYDHITREKLERILAVIQGTNQKALITHSHLDLQSQEAYDLAVQGKLRPMVKSPPIILGIRCLEFSPPEFTLEIQCMHETQQYLRKMIHEIGLELRSSAVCTQVRRSRDGPFTVDCSLLRTQWDLGSIQGAIRECRAQTEGVSRGNPDREAAEGPIPGPSRGAEGEGELRA.

Asp-101 (nucleophile) is an active-site residue. The interval 292 to 325 (QTEGVSRGNPDREAAEGPIPGPSRGAEGEGELRA) is disordered.

It belongs to the pseudouridine synthase TruB family.

The protein localises to the mitochondrion matrix. It carries out the reaction a uridine in mRNA = a pseudouridine in mRNA. It catalyses the reaction uridine(55) in tRNA = pseudouridine(55) in tRNA. In terms of biological role, minor enzyme contributing to the isomerization of uridine to pseudouridine (pseudouridylation) of specific mitochondrial mRNAs (mt-mRNAs) such as COXI and COXIII mt-mRNAs, modulating the efficiency of mitochondrial protein synthesis without changes in transcript abundance or stability. Also catalyzes pseudouridylation of some tRNAs, including synthesis of pseudouridine(55) from uracil-55, in the psi GC loop of a subset of tRNAs. This Xenopus tropicalis (Western clawed frog) protein is Pseudouridylate synthase TRUB2, mitochondrial.